Here is an 88-residue protein sequence, read N- to C-terminus: Cuticle protein 70, isoforms A and B (88 aa).

Tandem repeats lie at residues 7–10 (AAPA), 48–51 (AAPA), 55–58 (AAVP), 60–63 (AAPV), and 66–69 (AAPV).

Functionally, component of the cuticle of migratory locust which contains more than 100 different structural proteins. The sequence is that of Cuticle protein 70, isoforms A and B from Locusta migratoria (Migratory locust).